The sequence spans 241 residues: Small ribosomal subunit protein uS3c (241 aa).

Belongs to the universal ribosomal protein uS3 family. As to quaternary structure, part of the 30S ribosomal subunit.

The protein localises to the plastid. The sequence is that of Small ribosomal subunit protein uS3c (rps3) from Helicosporidium sp. subsp. Simulium jonesii (Green alga).